Reading from the N-terminus, the 268-residue chain is Thiazole synthase (268 aa).

Lysine 100 functions as the Schiff-base intermediate with DXP in the catalytic mechanism. 1-deoxy-D-xylulose 5-phosphate is bound by residues glycine 161, 187–188 (AG), and 209–210 (NT). The tract at residues 248–268 (ATPSSPSEGMITGSPHSAANN) is disordered.

This sequence belongs to the ThiG family. As to quaternary structure, homotetramer. Forms heterodimers with either ThiH or ThiS.

It is found in the cytoplasm. It carries out the reaction [ThiS sulfur-carrier protein]-C-terminal-Gly-aminoethanethioate + 2-iminoacetate + 1-deoxy-D-xylulose 5-phosphate = [ThiS sulfur-carrier protein]-C-terminal Gly-Gly + 2-[(2R,5Z)-2-carboxy-4-methylthiazol-5(2H)-ylidene]ethyl phosphate + 2 H2O + H(+). The protein operates within cofactor biosynthesis; thiamine diphosphate biosynthesis. Its function is as follows. Catalyzes the rearrangement of 1-deoxy-D-xylulose 5-phosphate (DXP) to produce the thiazole phosphate moiety of thiamine. Sulfur is provided by the thiocarboxylate moiety of the carrier protein ThiS. In vitro, sulfur can be provided by H(2)S. This Nitrosomonas eutropha (strain DSM 101675 / C91 / Nm57) protein is Thiazole synthase.